The sequence spans 598 residues: F-box/WD repeat-containing protein 8 (598 aa).

The residue at position 1 (Met1) is an N-acetylmethionine. Positions 17–93 (LAQAQAPKKR…RSPLAREGAG (77 aa)) are disordered. Residues 29–40 (PEAAERRARRPE) show a composition bias toward basic and acidic residues. The segment covering 61–71 (EGAGRPPAARA) has biased composition (low complexity). A phosphoserine mark is found at Ser83 and Ser85. The 47-residue stretch at 113-159 (PFFDIQLPYELAINIFQYLDRKELGRCAQVSKTWKVIAEDEVLWYRL) folds into the F-box domain. 8 WD repeats span residues 201 to 250 (AVSE…LESE), 259 to 299 (QPNV…FEHD), 300 to 340 (ARIQ…AEFE), 341 to 383 (VPKL…LLYA), 384 to 429 (HGPP…LKLG), 430 to 475 (NVLR…SAHQ), 476 to 513 (LRVSAVQMDDWKIVSGGEEGLVSVWDYRMNQKLWEVYS), and 514 to 561 (GHPV…AYEF).

Component of the Cul7-RING(FBXW8) complex consisting of CUL7, RBX1, SKP1 and FBXW8; within the complex interacts with CUL7 and SKP1. Interacts with GLMN isoform 1. Interacts with OBSL1, CUL1, CUL2, CCT6B, PFDN5, CCT2, CCT3, CCT6A, CCT7, VBP1, CCDC8, ARF1, TRIP13, PDCD5 and GORASP1. Interacts with MAP4K1/HPK1 (when autophosphorylated). Associated component of the 3M complex. Interacts with POUF51 (when phosphorylated on 'Ser-355'). Phosphorylation at Ser-85 by mTORC2 promotes FBXW8 stabilization, allowing its translocation to the cytosol in response to insulin.

It is found in the cytoplasm. Its subcellular location is the perinuclear region. The protein localises to the golgi apparatus. The protein operates within protein modification; protein ubiquitination. Functionally, substrate-recognition component of the Cul7-RING(FBXW8) ubiquitin ligase complex, which mediates the ubiquitination and subsequent proteasomal degradation of target proteins. The Cul7-RING(FBXW8) complex mediates ubiquitination and consequent degradation of GORASP1, acting as a component of the ubiquitin ligase pathway that regulates Golgi morphogenesis and dendrite patterning in brain. Mediates ubiquitination and degradation of IRS1 in a mTOR-dependent manner: the Cul7-RING(FBXW8) complex recognizes and binds IRS1 previously phosphorylated by S6 kinase (RPS6KB1 or RPS6KB2). The Cul7-RING(FBXW8) complex also mediates ubiquitination of MAP4K1/HPK1: recognizes and binds autophosphorylated MAP4K1/HPK1, leading to its degradation, thereby affecting cell proliferation and differentiation. The Cul7-RING(FBXW8) complex also mediates ubiquitination of phosphorylated cyclin-D1 (CCND1). The Cul7-RING(FBXW8) complex is however not a major regulator of CCND1 stability during the G1/S transition. Associated component of the 3M complex, suggesting that it mediates some of 3M complex functions. The protein is F-box/WD repeat-containing protein 8 of Homo sapiens (Human).